The chain runs to 452 residues: UDP-N-acetylmuramate--L-alanine ligase (452 aa).

110-116 (GTHGKTT) serves as a coordination point for ATP.

This sequence belongs to the MurCDEF family.

Its subcellular location is the cytoplasm. It catalyses the reaction UDP-N-acetyl-alpha-D-muramate + L-alanine + ATP = UDP-N-acetyl-alpha-D-muramoyl-L-alanine + ADP + phosphate + H(+). It functions in the pathway cell wall biogenesis; peptidoglycan biosynthesis. Functionally, cell wall formation. The sequence is that of UDP-N-acetylmuramate--L-alanine ligase from Francisella philomiragia subsp. philomiragia (strain ATCC 25017 / CCUG 19701 / FSC 153 / O#319-036).